A 293-amino-acid polypeptide reads, in one-letter code: Protease HtpX (293 aa).

Helical transmembrane passes span 4 to 24 (IALFLITNLAVMLVFGLVLSL) and 34 to 54 (GLMIMAGLFGFGGAFVSLLMS). Zn(2+) is bound at residue His-139. The active site involves Glu-140. Zn(2+) is bound at residue His-143. A run of 2 helical transmembrane segments spans residues 158–178 (IVNTFVIFVSRLIAQVVSGFL) and 193–213 (LVYFAVATVLELVFGILASII). A Zn(2+)-binding site is contributed by Glu-222.

This sequence belongs to the peptidase M48B family. Zn(2+) is required as a cofactor.

Its subcellular location is the cell inner membrane. This Pectobacterium carotovorum subsp. carotovorum (strain PC1) protein is Protease HtpX.